Here is a 191-residue protein sequence, read N- to C-terminus: Protein YceI (191 aa).

Positions 1 to 22 (MKKSLLGLTFASLMFSAGSAVA) are cleaved as a signal peptide.

The protein belongs to the UPF0312 family. Type 1 subfamily.

The protein resides in the periplasm. The polypeptide is Protein YceI (Shigella boydii serotype 4 (strain Sb227)).